The following is a 276-amino-acid chain: Pantothenate synthetase (276 aa).

Met27–His34 contributes to the ATP binding site. His34 functions as the Proton donor in the catalytic mechanism. Gln58 provides a ligand contact to (R)-pantoate. Gln58 lines the beta-alanine pocket. Residue Gly147–Asp150 participates in ATP binding. Position 153 (Gln153) interacts with (R)-pantoate. Residues Val176 and Leu184–Arg187 each bind ATP.

It belongs to the pantothenate synthetase family. In terms of assembly, homodimer.

The protein resides in the cytoplasm. It carries out the reaction (R)-pantoate + beta-alanine + ATP = (R)-pantothenate + AMP + diphosphate + H(+). It participates in cofactor biosynthesis; (R)-pantothenate biosynthesis; (R)-pantothenate from (R)-pantoate and beta-alanine: step 1/1. Catalyzes the condensation of pantoate with beta-alanine in an ATP-dependent reaction via a pantoyl-adenylate intermediate. This chain is Pantothenate synthetase, found in Helicobacter pylori (strain J99 / ATCC 700824) (Campylobacter pylori J99).